The following is a 487-amino-acid chain: Phosphoglucosamine mutase (487 aa).

Ser134 (phosphoserine intermediate) is an active-site residue. Residues Ser134, Asp277, Asp279, and Asp281 each contribute to the Mg(2+) site. Ser134 carries the phosphoserine modification.

It belongs to the phosphohexose mutase family. Requires Mg(2+) as cofactor. Activated by phosphorylation.

The catalysed reaction is alpha-D-glucosamine 1-phosphate = D-glucosamine 6-phosphate. Its function is as follows. Catalyzes the conversion of glucosamine-6-phosphate to glucosamine-1-phosphate. The protein is Phosphoglucosamine mutase of Gloeothece citriformis (strain PCC 7424) (Cyanothece sp. (strain PCC 7424)).